A 149-amino-acid chain; its full sequence is Protegrin-5 (149 aa).

The N-terminal stretch at 1-29 (METQRASLCLGRWSLWLLLLGLVVPSASA) is a signal peptide. Positions 30–130 (QALSYREAVL…DITCNEVQGV (101 aa)) are excised as a propeptide. The segment at 61–80 (DQPPKADEDPGTPKPVSFTV) is disordered. 4 disulfide bridges follow: Cys85/Cys96, Cys107/Cys124, Cys136/Cys145, and Cys138/Cys143. Arginine amide is present on Arg148.

This sequence belongs to the cathelicidin family.

The protein resides in the secreted. Its function is as follows. Microbicidal activity. The sequence is that of Protegrin-5 (NPG5) from Sus scrofa (Pig).